Here is a 119-residue protein sequence, read N- to C-terminus: uncharacterized protein (119 aa).

Positions 1-22 (MQGQAGKRKTDGKVPSNTEQNC) are disordered.

This is an uncharacterized protein from Saccharomyces cerevisiae (strain ATCC 204508 / S288c) (Baker's yeast).